Here is a 220-residue protein sequence, read N- to C-terminus: Iron-sulfur cluster repair protein YtfE (220 aa).

The protein belongs to the RIC family. YtfE subfamily. Homodimer.

It is found in the cytoplasm. Its function is as follows. Di-iron-containing protein involved in the repair of iron-sulfur clusters damaged by oxidative and nitrosative stress conditions. This is Iron-sulfur cluster repair protein YtfE from Citrobacter koseri (strain ATCC BAA-895 / CDC 4225-83 / SGSC4696).